A 126-amino-acid chain; its full sequence is Prefoldin subunit beta (126 aa).

Belongs to the prefoldin subunit beta family. As to quaternary structure, heterohexamer of two alpha and four beta subunits.

It is found in the cytoplasm. In terms of biological role, molecular chaperone capable of stabilizing a range of proteins. Seems to fulfill an ATP-independent, HSP70-like function in archaeal de novo protein folding. This is Prefoldin subunit beta (pfdB) from Pyrobaculum aerophilum (strain ATCC 51768 / DSM 7523 / JCM 9630 / CIP 104966 / NBRC 100827 / IM2).